A 585-amino-acid chain; its full sequence is MFSCFCFSLQDNSFSSTTVTECDEDPVSLHEDQTDCSSLRDENNKENYPDAGALVEEHAPPSWEPQQQNVEATVLVDSVLRPSMGNFKSRKPKSIFKAESGRSHGESQETEHVVSSQSECQVRAGTPAHESPQNNAFKCQETVRLQPRIDQRTAISPKDAFETRQDLNEEEAAQVHGVKDPAPASTQSVLADGTDSADPSPVHKDGQNEADSAPEDLHSVGTSRLLYHITDGDNPLLSPRCSIFSQSQRFNLDPESAPSPPSTQQFMMPRSSSRCSCGDGKEPQTITQLTKHIQSLKRKIRKFEEKFEQEKKYRPSHGDKTSNPEVLKWMNDLAKGRKQLKELKLKLSEEQGSAPKGPPRNLLCEQPTVPRENGKPEAAGPEPSSSGEETPDAALTCLKERREQLPPQEDSKVTKQDKNLIKPLYDRYRIIKQILSTPSLIPTIQEEEDSDEDRPQGSQQPSLADPASHLPVGDHLTYSNETEPVRALLPDEKKEVKPPALSMSNLHEATMPVLLDHLRETRADKKRLRKALREFEEQFFKQTGRSPQKEDRIPMADEYYEYKHIKAKLRLLEVLISKQDVAKTI.

Disordered regions lie at residues 26-45 (PVSL…ENNK), 83-138 (SMGN…NAFK), and 171-216 (EAAQ…APED). Basic and acidic residues-rich tracts occupy residues 27-45 (VSLH…ENNK) and 99-112 (ESGR…ETEH). A Phosphoserine modification is found at S131. Position 238 is a phosphoserine (S238). Disordered stretches follow at residues 250-282 (FNLD…DGKE), 349-391 (EEQG…EETP), and 441-477 (IPTI…DHLT). Over residues 262–275 (STQQFMMPRSSSRC) the composition is skewed to polar residues. S385 and S386 each carry phosphoserine.

Belongs to the FAM13 family.

In Homo sapiens (Human), this protein is Protein FAM13C (FAM13C).